Here is a 64-residue protein sequence, read N- to C-terminus: Large ribosomal subunit protein uL30 (64 aa).

Belongs to the universal ribosomal protein uL30 family. Part of the 50S ribosomal subunit.

This is Large ribosomal subunit protein uL30 from Rhodopseudomonas palustris (strain BisB18).